The chain runs to 159 residues: uncharacterized protein (159 aa).

3 helical membrane-spanning segments follow: residues 10 to 30 (FLSMFFMAILFFPAFNASLFF), 52 to 72 (MLILCFGFMSFSFLNIHVILL), and 96 to 116 (LTLIFLLIAIVIAPLIAPFVT).

Its subcellular location is the membrane. This is an uncharacterized protein from Escherichia coli (strain K12).